A 188-amino-acid polypeptide reads, in one-letter code: MSQDDLEIDLDAIQRRMDGAMHALRTEFGSLRTGRASASILEPIHVDAYGQQTPLNQLGTINVPEPRMVVINVWDKGMISKVERAIRDSGIGINPVVDGPIIRLPIPELNEERRKELSKVAAHYAEQARVAIRNVRRDGMDQIKKAKSAGMAEDDQKMWSDEVQALTDKAIAAVDKALEEKQKEIMQV.

Belongs to the RRF family.

It localises to the cytoplasm. Functionally, responsible for the release of ribosomes from messenger RNA at the termination of protein biosynthesis. May increase the efficiency of translation by recycling ribosomes from one round of translation to another. The chain is Ribosome-recycling factor from Cereibacter sphaeroides (strain ATCC 17029 / ATH 2.4.9) (Rhodobacter sphaeroides).